A 521-amino-acid chain; its full sequence is Vang-like protein 2 (521 aa).

A disordered region spans residues 1-81 (MDTESQYSGY…TTVVTGTSEH (81 aa)). The Cytoplasmic segment spans residues 1–108 (MDTESQYSGY…VPLDCSRHLG (108 aa)). Residues 15–33 (GHSRSSRKHRDRRDRHRSK) show a composition bias toward basic residues. The segment covering 57–67 (ESTRGDERDDN) has biased composition (basic and acidic residues). A compositionally biased stretch (low complexity) spans 69-81 (GETTTVVTGTSEH). A helical membrane pass occupies residues 109–129 (VAAGATLALLSFLTPLAFLLL). The Extracellular portion of the chain corresponds to 130–147 (PPLLWREELEPCGTACEG). Residues 148–168 (LFISVAFKLLILLLGSWALFF) form a helical membrane-spanning segment. At 169-178 (RRPKASLPRV) the chain is on the cytoplasmic side. Residues 179–199 (FVLRALLMVLVFLLVVSYWLF) traverse the membrane as a helical segment. Residues 200–217 (YGVRILDARERSYQGVVQ) are Extracellular-facing. Residues 218–238 (FAVSLVDALLFVHYLAVVLLE) form a helical membrane-spanning segment. Over 239 to 521 (LRQLQPQFTL…VMRLQSETSV (283 aa)) the chain is Cytoplasmic.

It belongs to the Vang family. In terms of assembly, homodimer and heterodimer with VANGL1. Interacts through its C-terminal region with the N-terminal half of DVL1, DVL2 and DVL3. The PDZ domain of DVL1, DVL2 and DVL3 is required for the interaction. Also interacts with the PDZ domains of MAGI3, SCRIB/SCRB1 and FZD3. Interacts with PRICKLE3.

It localises to the cell membrane. Functionally, involved in the control of early morphogenesis and patterning of both axial midline structures and the development of neural plate. Plays a role in the regulation of planar cell polarity, particularly in the orientation of stereociliary bundles in the cochlea. Required for polarization and movement of myocardializing cells in the outflow tract and seems to act via RHOA signaling to regulate this process. Required for cell surface localization of FZD3 and FZD6 in the inner ear. In Homo sapiens (Human), this protein is Vang-like protein 2 (VANGL2).